The following is a 394-amino-acid chain: Flagellin A (394 aa).

This sequence belongs to the bacterial flagellin family.

It localises to the secreted. Its subcellular location is the bacterial flagellum. In terms of biological role, flagellin is the subunit protein which polymerizes to form the filaments of bacterial flagella. Homomer of FlaA is able to form a functional filament. This Rhizobium meliloti (strain 1021) (Ensifer meliloti) protein is Flagellin A (flaA).